A 561-amino-acid polypeptide reads, in one-letter code: Interleukin-1 receptor-like 2 (561 aa).

The signal sequence occupies residues 1–21 (MGMPPLLFCWVSFVLPLFVAA). Ig-like C2-type domains are found at residues 22–113 (GNCT…INLT), 128–215 (SINS…VRNY), and 225–321 (SGGR…TCHA). The Extracellular portion of the chain corresponds to 22–338 (GNCTDVYMHH…ILKRPAPDFR (317 aa)). N-linked (GlcNAc...) asparagine glycans are attached at residues Asn23, Asn43, Asn55, Asn111, and Asn130. Cys44 and Cys97 are oxidised to a cystine. Cys149 and Cys199 are disulfide-bonded. N-linked (GlcNAc...) asparagine glycans are attached at residues Asn231, Asn237, Asn253, Asn269, Asn290, and Asn302. The cysteines at positions 252 and 319 are disulfide-linked. The chain crosses the membrane as a helical span at residues 339–358 (AYLIGGLMAFLLLAVSILYI). At 359–561 (YNTFKVDIVL…LLGHTPRIPG (203 aa)) the chain is on the cytoplasmic side. The TIR domain occupies 384-539 (KLYDAYVLYP…KFWKKVRYHM (156 aa)). Residue Glu470 is part of the active site.

It belongs to the interleukin-1 receptor family. Interacts with IL1RAP; the association is enhanced by IL36B indicative for an functional signaling complex and inhibited by IL36RN. In terms of tissue distribution, predominant expression in the lung and epididymis, with lower expression in cerebral cortex and testis. Expression in the brain is non-neuronal and associated with the cerebral vasculature. Not detected in any cell line tested.

The protein localises to the membrane. The catalysed reaction is NAD(+) + H2O = ADP-D-ribose + nicotinamide + H(+). In terms of biological role, receptor for interleukin-36 (IL36A, IL36B and IL36G). After binding to interleukin-36 associates with the coreceptor IL1RAP to form the interleukin-36 receptor complex which mediates interleukin-36-dependent activation of NF-kappa-B, MAPK and other pathways. The IL-36 signaling system is thought to be present in epithelial barriers and to take part in local inflammatory response; it is similar to the IL-1 system. Seems to be involved in skin inflammatory response by induction of the IL-23/IL-17/IL-22 pathway. Receptor for the interleukin IL36G. Binding to the agonist leads to the activation of NF-kappa-B. This chain is Interleukin-1 receptor-like 2 (Il1rl2), found in Rattus norvegicus (Rat).